The primary structure comprises 277 residues: Undecaprenyl-diphosphatase (277 aa).

A run of 8 helical transmembrane segments spans residues 11 to 31 (WWQA…PISS), 47 to 67 (AGAS…LIYF), 96 to 116 (VGIL…KAIW), 123 to 143 (LWVI…AEQT), 153 to 173 (LGIW…IPGV), 197 to 217 (SFLL…ISEF), 227 to 247 (LGTL…IQFL), and 254 to 274 (LFIV…ALGF).

This sequence belongs to the UppP family.

The protein resides in the cell inner membrane. The enzyme catalyses di-trans,octa-cis-undecaprenyl diphosphate + H2O = di-trans,octa-cis-undecaprenyl phosphate + phosphate + H(+). Functionally, catalyzes the dephosphorylation of undecaprenyl diphosphate (UPP). Confers resistance to bacitracin. This is Undecaprenyl-diphosphatase from Synechococcus sp. (strain JA-2-3B'a(2-13)) (Cyanobacteria bacterium Yellowstone B-Prime).